The chain runs to 238 residues: Ribosomal RNA large subunit methyltransferase E (238 aa).

S-adenosyl-L-methionine contacts are provided by G85, W87, D113, D129, and D153. K193 functions as the Proton acceptor in the catalytic mechanism.

The protein belongs to the class I-like SAM-binding methyltransferase superfamily. RNA methyltransferase RlmE family.

The protein resides in the cytoplasm. The enzyme catalyses uridine(2552) in 23S rRNA + S-adenosyl-L-methionine = 2'-O-methyluridine(2552) in 23S rRNA + S-adenosyl-L-homocysteine + H(+). Its function is as follows. Specifically methylates the uridine in position 2552 of 23S rRNA at the 2'-O position of the ribose in the fully assembled 50S ribosomal subunit. In Ruegeria sp. (strain TM1040) (Silicibacter sp.), this protein is Ribosomal RNA large subunit methyltransferase E.